Reading from the N-terminus, the 360-residue chain is Alanine racemase (360 aa).

Lys34 acts as the Proton acceptor; specific for D-alanine in catalysis. At Lys34 the chain carries N6-(pyridoxal phosphate)lysine. Arg129 lines the substrate pocket. Tyr254 acts as the Proton acceptor; specific for L-alanine in catalysis. Position 302 (Met302) interacts with substrate.

It belongs to the alanine racemase family. It depends on pyridoxal 5'-phosphate as a cofactor.

The enzyme catalyses L-alanine = D-alanine. The protein operates within amino-acid biosynthesis; D-alanine biosynthesis; D-alanine from L-alanine: step 1/1. Catalyzes the interconversion of L-alanine and D-alanine. May also act on other amino acids. This chain is Alanine racemase (alr), found in Pectobacterium carotovorum subsp. carotovorum (strain PC1).